The primary structure comprises 681 residues: DNA ligase (681 aa).

Residues 35-39 (DAEYD), 84-85 (SI), and Glu-121 contribute to the NAD(+) site. The N6-AMP-lysine intermediate role is filled by Lys-123. NAD(+) is bound by residues Arg-144, Glu-180, Lys-300, and Lys-324. Positions 418, 421, 436, and 442 each coordinate Zn(2+). A BRCT domain is found at 601–681 (AADGPASGKT…GLRRLLEQPA (81 aa)).

This sequence belongs to the NAD-dependent DNA ligase family. LigA subfamily. The cofactor is Mg(2+). It depends on Mn(2+) as a cofactor.

The catalysed reaction is NAD(+) + (deoxyribonucleotide)n-3'-hydroxyl + 5'-phospho-(deoxyribonucleotide)m = (deoxyribonucleotide)n+m + AMP + beta-nicotinamide D-nucleotide.. Functionally, DNA ligase that catalyzes the formation of phosphodiester linkages between 5'-phosphoryl and 3'-hydroxyl groups in double-stranded DNA using NAD as a coenzyme and as the energy source for the reaction. It is essential for DNA replication and repair of damaged DNA. The sequence is that of DNA ligase from Aromatoleum aromaticum (strain DSM 19018 / LMG 30748 / EbN1) (Azoarcus sp. (strain EbN1)).